A 434-amino-acid polypeptide reads, in one-letter code: Transcriptional enhancer factor TEF-3 (434 aa).

Residues 1 to 28 (MEGTAGTITSNEWSSPTSPEGSTASGGS) are compositionally biased toward polar residues. Disordered stretches follow at residues 1–42 (MEGT…AEGV) and 188–215 (QPPL…PPWQ). Residues 36-112 (DNDAEGVWSP…QVLARRKARE (77 aa)) constitute a DNA-binding region (TEA). The span at 201–213 (GPAPSPSAPPAPP) shows a compositional bias: pro residues.

Interacts with YAP1 and WWTR1/TAZ. In terms of tissue distribution, preferentially expressed in skeletal muscle. Lower levels in pancreas, placenta, and heart.

Its subcellular location is the nucleus. Transcription factor which plays a key role in the Hippo signaling pathway, a pathway involved in organ size control and tumor suppression by restricting proliferation and promoting apoptosis. The core of this pathway is composed of a kinase cascade wherein MST1/MST2, in complex with its regulatory protein SAV1, phosphorylates and activates LATS1/2 in complex with its regulatory protein MOB1, which in turn phosphorylates and inactivates YAP1 oncoprotein and WWTR1/TAZ. Acts by mediating gene expression of YAP1 and WWTR1/TAZ, thereby regulating cell proliferation, migration and epithelial mesenchymal transition (EMT) induction. Binds specifically and non-cooperatively to the Sph and GT-IIC 'enhansons' (5'-GTGGAATGT-3') and activates transcription. Binds to the M-CAT motif. The sequence is that of Transcriptional enhancer factor TEF-3 (TEAD4) from Homo sapiens (Human).